Reading from the N-terminus, the 426-residue chain is Histidine--tRNA ligase (426 aa).

Belongs to the class-II aminoacyl-tRNA synthetase family. Homodimer.

The protein resides in the cytoplasm. The enzyme catalyses tRNA(His) + L-histidine + ATP = L-histidyl-tRNA(His) + AMP + diphosphate + H(+). The chain is Histidine--tRNA ligase from Streptococcus equi subsp. zooepidemicus (strain H70).